The chain runs to 518 residues: Nitrogenase iron-iron protein alpha chain (518 aa).

Residues cysteine 49 and cysteine 75 each contribute to the [8Fe-7S] cluster site. The [8Fe-9S-C-homocitryl] cluster site is built by cysteine 257 and histidine 423.

As to quaternary structure, hexamer of two alpha, two beta, and two delta chains. [8Fe-7S] cluster is required as a cofactor. The cofactor is [8Fe-9S-C-homocitryl] cluster.

The enzyme catalyses N2 + 8 reduced [2Fe-2S]-[ferredoxin] + 16 ATP + 16 H2O = H2 + 8 oxidized [2Fe-2S]-[ferredoxin] + 2 NH4(+) + 16 ADP + 16 phosphate + 6 H(+). Its function is as follows. This iron-iron protein is part of the nitrogenase complex that catalyzes the key enzymatic reactions in nitrogen fixation. Other nitrogenase complexes utilize a molybdenum-iron protein or a vanadium-iron protein. The polypeptide is Nitrogenase iron-iron protein alpha chain (anfD) (Ruminiclostridium hungatei (Clostridium hungatei)).